Here is a 732-residue protein sequence, read N- to C-terminus: Polyribonucleotide nucleotidyltransferase (732 aa).

Mg(2+)-binding residues include aspartate 515 and aspartate 521. In terms of domain architecture, KH spans 581 to 641; that stretch reads PKLELFNVDP…KNVDAAKDYI (61 aa). One can recognise an S1 motif domain in the interval 672–731; the sequence is GDEFTGSVKSVVDFGVFIELKDGVDGLLHISKIKSPLNVGDQVKVCVSEQKGNKISLSLV.

This sequence belongs to the polyribonucleotide nucleotidyltransferase family. It depends on Mg(2+) as a cofactor.

It localises to the cytoplasm. The catalysed reaction is RNA(n+1) + phosphate = RNA(n) + a ribonucleoside 5'-diphosphate. Its function is as follows. Involved in mRNA degradation. Catalyzes the phosphorolysis of single-stranded polyribonucleotides processively in the 3'- to 5'-direction. This Campylobacter concisus (strain 13826) protein is Polyribonucleotide nucleotidyltransferase.